A 265-amino-acid chain; its full sequence is Small ribosomal subunit protein uS3 (265 aa).

The KH type-2 domain occupies 39–107 (VREFLKKKLK…PVHVNIEEIR (69 aa)). Positions 211–265 (NDAPVVEEPQEDRRRRPGRPEGRRREGEGRPAGNRRGGAGAGRRAAPGADAKSGE) are disordered. A compositionally biased stretch (basic and acidic residues) spans 221–239 (EDRRRRPGRPEGRRREGEG).

The protein belongs to the universal ribosomal protein uS3 family. As to quaternary structure, part of the 30S ribosomal subunit. Forms a tight complex with proteins S10 and S14.

Binds the lower part of the 30S subunit head. Binds mRNA in the 70S ribosome, positioning it for translation. This Cupriavidus metallidurans (strain ATCC 43123 / DSM 2839 / NBRC 102507 / CH34) (Ralstonia metallidurans) protein is Small ribosomal subunit protein uS3.